Consider the following 586-residue polypeptide: CTP synthase (586 aa).

Residues 1–265 (MVRFIFVTGG…ENKVLNFFNI (265 aa)) form an amidoligase domain region. Ser-13 is a CTP binding site. Position 13 (Ser-13) interacts with UTP. ATP is bound by residues 14-19 (SLGKGI) and Asp-71. 2 residues coordinate Mg(2+): Asp-71 and Glu-139. CTP is bound by residues 146–148 (DIE), 186–191 (KTKPTQ), and Lys-222. Residues 186–191 (KTKPTQ) and Lys-222 contribute to the UTP site. The Glutamine amidotransferase type-1 domain occupies 290–582 (KIAIITKYHK…IKATIEYNKS (293 aa)). An L-glutamine-binding site is contributed by Gly-352. The active-site Nucleophile; for glutamine hydrolysis is the Cys-379. Residues 380 to 383 (FGMQ) and Glu-403 each bind L-glutamine. In terms of domain architecture, RPE1 insert spans 429–473 (AHISKCTYSEAFECDASTVYTNIHEDSNNLSTDKLQIETNFRNMS). An L-glutamine-binding site is contributed by Arg-510. Active-site residues include His-555 and Glu-557.

The protein belongs to the CTP synthase family. Homotetramer.

It catalyses the reaction UTP + L-glutamine + ATP + H2O = CTP + L-glutamate + ADP + phosphate + 2 H(+). It carries out the reaction L-glutamine + H2O = L-glutamate + NH4(+). The enzyme catalyses UTP + NH4(+) + ATP = CTP + ADP + phosphate + 2 H(+). The protein operates within pyrimidine metabolism; CTP biosynthesis via de novo pathway; CTP from UDP: step 2/2. Its activity is regulated as follows. Allosterically activated by GTP, when glutamine is the substrate; GTP has no effect on the reaction when ammonia is the substrate. The allosteric effector GTP functions by stabilizing the protein conformation that binds the tetrahedral intermediate(s) formed during glutamine hydrolysis. Inhibited by the product CTP, via allosteric rather than competitive inhibition. Its function is as follows. Catalyzes the ATP-dependent amination of UTP to CTP with either L-glutamine or ammonia as the source of nitrogen. Regulates intracellular CTP levels through interactions with the four ribonucleotide triphosphates. The sequence is that of CTP synthase from Rickettsia prowazekii (strain Madrid E).